The chain runs to 493 residues: Glutamyl-tRNA(Gln) amidotransferase subunit A (493 aa).

Active-site charge relay system residues include lysine 81 and serine 156. Serine 180 acts as the Acyl-ester intermediate in catalysis.

It belongs to the amidase family. GatA subfamily. As to quaternary structure, heterotrimer of A, B and C subunits.

It catalyses the reaction L-glutamyl-tRNA(Gln) + L-glutamine + ATP + H2O = L-glutaminyl-tRNA(Gln) + L-glutamate + ADP + phosphate + H(+). Functionally, allows the formation of correctly charged Gln-tRNA(Gln) through the transamidation of misacylated Glu-tRNA(Gln) in organisms which lack glutaminyl-tRNA synthetase. The reaction takes place in the presence of glutamine and ATP through an activated gamma-phospho-Glu-tRNA(Gln). In Mycolicibacterium paratuberculosis (strain ATCC BAA-968 / K-10) (Mycobacterium paratuberculosis), this protein is Glutamyl-tRNA(Gln) amidotransferase subunit A.